Here is a 275-residue protein sequence, read N- to C-terminus: Light-independent protochlorophyllide reductase iron-sulfur ATP-binding protein (275 aa).

ATP contacts are provided by residues 12-17 and K41; that span reads GIGKST. Mg(2+) is bound at residue S16. [4Fe-4S] cluster contacts are provided by C97 and C131. An ATP-binding site is contributed by 182 to 183; that stretch reads NR.

Belongs to the NifH/BchL/ChlL family. As to quaternary structure, homodimer. Protochlorophyllide reductase is composed of three subunits; BchL, BchN and BchB. [4Fe-4S] cluster serves as cofactor.

It carries out the reaction chlorophyllide a + oxidized 2[4Fe-4S]-[ferredoxin] + 2 ADP + 2 phosphate = protochlorophyllide a + reduced 2[4Fe-4S]-[ferredoxin] + 2 ATP + 2 H2O. It participates in porphyrin-containing compound metabolism; bacteriochlorophyll biosynthesis (light-independent). Its function is as follows. Component of the dark-operative protochlorophyllide reductase (DPOR) that uses Mg-ATP and reduced ferredoxin to reduce ring D of protochlorophyllide (Pchlide) to form chlorophyllide a (Chlide). This reaction is light-independent. The L component serves as a unique electron donor to the NB-component of the complex, and binds Mg-ATP. The sequence is that of Light-independent protochlorophyllide reductase iron-sulfur ATP-binding protein from Chlorobium phaeobacteroides (strain DSM 266 / SMG 266 / 2430).